A 170-amino-acid chain; its full sequence is Cathelicidin antimicrobial peptide (170 aa).

The N-terminal stretch at 1-30 is a signal peptide; that stretch reads MKTQRDGPSLGRWSLVLLLLGLTMPLAITA. The propeptide at 31–131 is cathelin-like domain (CLD); that stretch reads QVLSYQEAVL…DISCDKDERK (101 aa). Intrachain disulfides connect C86/C97 and C108/C125. Residues 150–162 are active core; that stretch reads FKKIGQKINDFLG.

This sequence belongs to the cathelicidin family. In terms of assembly, monomer, homodimer or homotrimer (in vitro). Oligomerizes as tetra- or hexamer in solution (in vitro). Post-translationally, proteolytically cleaved by proteinase PRTN3 into antibacterial peptide LL-37. Proteolytically cleaved by cathepsin CTSG and neutrophil elastase ELANE. Resistant to proteolytic degradation in solution, and when bound to both zwitterionic (mimicking mammalian membranes) and negatively charged membranes (mimicking bacterial membranes). In terms of processing, after secretion onto the skin surface, the CAMP gene product is processed by a serine protease-dependent mechanism into multiple novel antimicrobial peptides distinct from and shorter than cathelicidin LL-37. These peptides show enhanced antimicrobial action, acquiring the ability to kill skin pathogens such as S.aureus, E.coli and C.albicans. These peptides have lost the ability to stimulate CXCL8/IL8 release from keratinocytes. The peptides act synergistically, killing bacteria at lower concentrations when present together, and maintain activity at increased salt condition.

It is found in the secreted. The protein localises to the vesicle. Its function is as follows. Antimicrobial protein that is an integral component of the innate immune system. Binds to bacterial lipopolysaccharides (LPS). Acts via neutrophil N-formyl peptide receptors to enhance the release of CXCL2. Postsecretory processing generates multiple cathelicidin antimicrobial peptides with various lengths which act as a topical antimicrobial defense in sweat on skin. The unprocessed precursor form, cathelicidin antimicrobial peptide, inhibits the growth of Gram-negative E.coli and E.aerogenes with efficiencies comparable to that of the mature peptide LL-37 (in vitro). In terms of biological role, antimicrobial peptide that is an integral component of the innate immune system. Binds to bacterial lipopolysaccharides (LPS). Causes membrane permeabilization by forming transmembrane pores (in vitro). Causes lysis of E.coli. Exhibits antimicrobial activity against Gram-negative bacteria such as P.aeruginosa, S.typhimurium, E.aerogenes, E.coli and P.syringae, Gram-positive bacteria such as L.monocytogenes, S.epidermidis, S.pyogenes and S.aureus, as well as vancomycin-resistant enterococci (in vitro). Exhibits antimicrobial activity against methicillin-resistant S.aureus, P.mirabilis, and C.albicans in low-salt media, but not in media containing 100 mM NaCl (in vitro). Forms chiral supramolecular assemblies with quinolone signal (PQS) molecules of P.aeruginosa, which may lead to interference of bacterial quorum signaling and perturbance of bacterial biofilm formation. May form supramolecular fiber-like assemblies on bacterial membranes. Induces cytokine and chemokine producation as well as TNF/TNFA and CSF2/GMCSF production in normal human keratinocytes. Exhibits hemolytic activity against red blood cells. Exhibits antimicrobial activity against E.coli and B.megaterium (in vitro). The chain is Cathelicidin antimicrobial peptide from Cebus capucinus (White-faced sapajou).